Reading from the N-terminus, the 97-residue chain is Anti-sigma-YlaC factor YlaD (97 aa).

3 residues coordinate Zn(2+): H29, C33, and C36. A helical transmembrane segment spans residues Y71–I93.

It belongs to the zinc-associated anti-sigma factor (ZAS) superfamily. It depends on Zn(2+) as a cofactor.

The protein resides in the cell membrane. Anti-sigma factor for YlaC. The chain is Anti-sigma-YlaC factor YlaD (ylaD) from Bacillus subtilis (strain 168).